Reading from the N-terminus, the 190-residue chain is Adenine phosphoribosyltransferase (190 aa).

The protein belongs to the purine/pyrimidine phosphoribosyltransferase family. Homodimer.

The protein resides in the cytoplasm. The enzyme catalyses AMP + diphosphate = 5-phospho-alpha-D-ribose 1-diphosphate + adenine. Its pathway is purine metabolism; AMP biosynthesis via salvage pathway; AMP from adenine: step 1/1. Its function is as follows. Catalyzes a salvage reaction resulting in the formation of AMP, that is energically less costly than de novo synthesis. The protein is Adenine phosphoribosyltransferase of Treponema denticola (strain ATCC 35405 / DSM 14222 / CIP 103919 / JCM 8153 / KCTC 15104).